The primary structure comprises 464 residues: 3-isopropylmalate dehydratase large subunit (464 aa).

[4Fe-4S] cluster contacts are provided by cysteine 337, cysteine 397, and cysteine 400.

This sequence belongs to the aconitase/IPM isomerase family. LeuC type 1 subfamily. As to quaternary structure, heterodimer of LeuC and LeuD. [4Fe-4S] cluster serves as cofactor.

The enzyme catalyses (2R,3S)-3-isopropylmalate = (2S)-2-isopropylmalate. The protein operates within amino-acid biosynthesis; L-leucine biosynthesis; L-leucine from 3-methyl-2-oxobutanoate: step 2/4. Functionally, catalyzes the isomerization between 2-isopropylmalate and 3-isopropylmalate, via the formation of 2-isopropylmaleate. The polypeptide is 3-isopropylmalate dehydratase large subunit (Bacillus cereus (strain G9842)).